Consider the following 137-residue polypeptide: Interferon-induced transmembrane protein 3 (137 aa).

Residues 1–57 (MNHTSQAFVNAATGGQPPNYERIKEEYEVSELGAPHGSASVRTTVINMPREVSVPDH) are Cytoplasmic-facing. Tyr20 bears the Phosphotyrosine mark. Lys24 participates in a covalent cross-link: Glycyl lysine isopeptide (Lys-Gly) (interchain with G-Cter in ubiquitin). Residue Tyr27 is modified to Phosphotyrosine. Residues 58 to 78 (VVWSLFNTLFMNFCCLGFIAY) constitute an intramembrane region (helical). Residues 60-93 (WSLFNTLFMNFCCLGFIAYAYSVKSRDRKMVGDM) are interaction with SPP1. S-palmitoyl cysteine attachment occurs at residues Cys71 and Cys72. Topologically, residues 79–109 (AYSVKSRDRKMVGDMTGAQAYASTAKCLNIS) are cytoplasmic. Glycyl lysine isopeptide (Lys-Gly) (interchain with G-Cter in ubiquitin) cross-links involve residues Lys83, Lys88, and Lys104. Cys105 carries the S-palmitoyl cysteine lipid modification. Residues 108 to 133 (ISSLVLSILMVIITIVTVVIIALNAP) form an interaction with VAPA region. The helical transmembrane segment at 110–130 (SLVLSILMVIITIVTVVIIAL) threads the bilayer. Residues 131–137 (NAPRLQT) are Extracellular-facing.

This sequence belongs to the CD225/Dispanin family. Interacts with ATP6V0B. Interacts with CD81. Interacts with SPP1; the interaction reduces OPN expression. Interacts with BRI3. Post-translationally, polyubiquitinated with both 'Lys-48' and 'Lys-63' linkages. Ubiquitination negatively regulates antiviral activity. Lys-24 is the most prevalent ubiquitination site. In terms of processing, phosphorylation at Tyr-20 is required for endosomal and lysosomal location.

Its subcellular location is the cell membrane. It is found in the late endosome membrane. It localises to the early endosome membrane. The protein resides in the lysosome membrane. The protein localises to the cytoplasm. Its subcellular location is the perinuclear region. In terms of biological role, IFN-induced antiviral protein which disrupts intracellular cholesterol homeostasis. Inhibits the entry of viruses to the host cell cytoplasm by preventing viral fusion with cholesterol depleted endosomes. May inactivate new enveloped viruses which buds out of the infected cell, by letting them go out with a cholesterol depleted membrane. Active against multiple viruses. Plays a critical role in the structural stability and function of vacuolar ATPase (v-ATPase). Establishes physical contact with the v-ATPase of endosomes which is critical for proper clathrin localization and is also required for the function of the v-ATPase to lower the pH in phagocytic endosomes thus establishing an antiviral state. This is Interferon-induced transmembrane protein 3 from Rattus norvegicus (Rat).